Reading from the N-terminus, the 321-residue chain is Isoaspartyl peptidase (321 aa).

Threonine 179 acts as the Nucleophile in catalysis. Substrate is bound by residues 207-210 (RVGD) and 230-233 (TGTG).

It belongs to the Ntn-hydrolase family. In terms of assembly, heterotetramer of two alpha and two beta chains arranged as a dimer of alpha/beta heterodimers. Post-translationally, autocleaved. Generates the alpha and beta subunits. The N-terminal residue of the beta subunit is thought to be responsible for the nucleophile hydrolase activity. In terms of processing, both subunits undergo further processing at their C-termini. The overexpressed alpha subunit seems to consist of residues 2-161, with an oxidized Met residue and a tightly coordinated Na(+), whereas the overexpressed beta subunit is processed to residue 315 and has 3 oxidized Met residues. Processing of the alpha subunit is inhibited by Zn(2+).

The enzyme catalyses Cleavage of a beta-linked Asp residue from the N-terminus of a polypeptide.. In terms of biological role, degrades proteins damaged by L-isoaspartyl residue formation (also known as beta-Asp residues). Degrades L-isoaspartyl-containing di- and maybe also tripeptides. Also has L-asparaginase activity, although this may not be its principal function. May be involved in glutathione, and possibly other peptide, transport, although these results could also be due to polar effects of disruption. The protein is Isoaspartyl peptidase (iaaA) of Escherichia coli (strain K12).